The chain runs to 348 residues: Protein arginine N-methyltransferase 1 (348 aa).

The SAM-dependent MTase PRMT-type domain occupies 20–322 (EQHYFNSYDH…EKNNRDLNIK (303 aa)). Residues His-33, Arg-42, Gly-66, Asp-88, and Glu-117 each coordinate S-adenosyl-L-methionine. Active-site residues include Glu-132 and Glu-141.

The protein belongs to the class I-like SAM-binding methyltransferase superfamily. Protein arginine N-methyltransferase family. Homodimer. The dimers can then associate to form a ring-shaped homohexamer. Interacts with NPL3, BRE5, MTR4, SNF2, SUM1, and SSD1.

Its subcellular location is the nucleus. The catalysed reaction is L-arginyl-[protein] + S-adenosyl-L-methionine = N(omega)-methyl-L-arginyl-[protein] + S-adenosyl-L-homocysteine + H(+). It carries out the reaction L-arginyl-[protein] + 2 S-adenosyl-L-methionine = N(omega),N(omega)-dimethyl-L-arginyl-[protein] + 2 S-adenosyl-L-homocysteine + 2 H(+). In terms of biological role, S-adenosyl-L-methionine-dependent protein-arginine N-methyltransferase that catalyzes both the mono- and asymmetric (type I) dimethylation of the guanidino nitrogens of arginine residues in a variety of RNA-binding proteins such as heterogeneous nuclear ribonucleoproteins (hnRNPs) and small nuclear ribonucleoproteins (snRNPs). Methylates NAB2, NPL3, HRP1 and YRA1, shuttling hnRNPs involved in mRNA processing and export, facilitating their export out of the nucleus. Methylation of NPL3 weakens its interaction with THO2, a component of the TREX (transcription/export) complex important for transcriptional elongation and recruitment of mRNA export factors. Methylates the hnRNP HRB1, but does not influence its subcellular location. Methylates the nucleolar proteins GAR1, NOP1 and NSR1. Methylates the snRNP SNP1 and modulates the cotranscriptional recruitment of splicing factors. Dimethylates free histone H4 (HHF1/HHF2) at 'Arg-4' (H4R3me2a) and plays a role in preservation and establishment of silent chromatin domains. Mono- and dimethylates ribosomal protein S2 (RPS2) at 'Arg-11'. Methylates the catalytic subunit of the SWI/SNF chromatin-remodeling complex SNF2. The polypeptide is Protein arginine N-methyltransferase 1 (Saccharomyces cerevisiae (strain ATCC 204508 / S288c) (Baker's yeast)).